Reading from the N-terminus, the 285-residue chain is Probable endonuclease 4 (285 aa).

Zn(2+)-binding residues include His69, His109, Glu145, Asp179, His182, His216, Asp229, His231, and Glu261.

The protein belongs to the AP endonuclease 2 family. Requires Zn(2+) as cofactor.

It catalyses the reaction Endonucleolytic cleavage to 5'-phosphooligonucleotide end-products.. In terms of biological role, endonuclease IV plays a role in DNA repair. It cleaves phosphodiester bonds at apurinic or apyrimidinic (AP) sites, generating a 3'-hydroxyl group and a 5'-terminal sugar phosphate. This Escherichia coli O81 (strain ED1a) protein is Probable endonuclease 4.